The primary structure comprises 169 residues: Large ribosomal subunit protein uL10 (169 aa).

The protein belongs to the universal ribosomal protein uL10 family. As to quaternary structure, part of the ribosomal stalk of the 50S ribosomal subunit. The N-terminus interacts with L11 and the large rRNA to form the base of the stalk. The C-terminus forms an elongated spine to which L12 dimers bind in a sequential fashion forming a multimeric L10(L12)X complex.

Functionally, forms part of the ribosomal stalk, playing a central role in the interaction of the ribosome with GTP-bound translation factors. The protein is Large ribosomal subunit protein uL10 of Rickettsia typhi (strain ATCC VR-144 / Wilmington).